A 415-amino-acid polypeptide reads, in one-letter code: Tyrosine--tRNA ligase (415 aa).

Residues 54-63 carry the 'HIGH' region motif; sequence PTGSNIHLGH. Residues 248–252 carry the 'KMSKS' region motif; sequence KMSKS. Lys-251 lines the ATP pocket. Residues 351 to 415 form the S4 RNA-binding domain; sequence AKAFYLLSAV…GKKTFRRLTA (65 aa).

The protein belongs to the class-I aminoacyl-tRNA synthetase family. TyrS type 2 subfamily. As to quaternary structure, homodimer.

Its subcellular location is the cytoplasm. The catalysed reaction is tRNA(Tyr) + L-tyrosine + ATP = L-tyrosyl-tRNA(Tyr) + AMP + diphosphate + H(+). Functionally, catalyzes the attachment of tyrosine to tRNA(Tyr) in a two-step reaction: tyrosine is first activated by ATP to form Tyr-AMP and then transferred to the acceptor end of tRNA(Tyr). This is Tyrosine--tRNA ligase from Parasynechococcus marenigrum (strain WH8102).